The sequence spans 581 residues: Arginine--tRNA ligase (581 aa).

A 'HIGH' region motif is present at residues 122–132 (PNVAKPMHVGH).

This sequence belongs to the class-I aminoacyl-tRNA synthetase family. Monomer.

It localises to the cytoplasm. The catalysed reaction is tRNA(Arg) + L-arginine + ATP = L-arginyl-tRNA(Arg) + AMP + diphosphate. This chain is Arginine--tRNA ligase, found in Francisella tularensis subsp. tularensis (strain WY96-3418).